The primary structure comprises 188 residues: UPF0301 protein Smlt1098 (188 aa).

It belongs to the UPF0301 (AlgH) family.

The protein is UPF0301 protein Smlt1098 of Stenotrophomonas maltophilia (strain K279a).